The chain runs to 424 residues: MKLEMICTGEEVLAGQIVDTNAAWFANLMMENGIEVQRRVTVGDRLEDLVAVFQERSLHADVILVNGGLGPTSDDMSAEAMAKAKGESLVENAEWAERLHDWFTRHGREMPKSNIKQAWLPESAVMVDNPVGTACGFRVKLNRAWLFFTPGVPFEFKQMVEEQFLPFVKATFDAGSQVALRKLLTLGRGESSLADELEAMALPAGITLGYRSFMPYIEIKVFARGVEAIKALGAVTDEIAARLGNVVVAHNRTSLEEEIHARLNNSGISLSVAESCTGGLITSQLVGFPGSSSYLHQGLVTYSNESKVRVLGVSPQTLDDYGAVSIQTVEEMAKGARAILDSDFALATSGIAGPDGGTEEKPVGTVAIALATKGGVYSQMVKLPRRSRDMVRKVSAAVAYDMLRRELNGEAVIVDYSSISRYPK.

This sequence belongs to the CinA family.

The sequence is that of CinA-like protein from Shewanella amazonensis (strain ATCC BAA-1098 / SB2B).